The following is a 274-amino-acid chain: Large ribosomal subunit protein uL2 (274 aa).

The segment at 223-257 is disordered; the sequence is VAMNPVDHPHGGGEGRTSGGRHPVTPWGIPTKGYK.

The protein belongs to the universal ribosomal protein uL2 family. Part of the 50S ribosomal subunit. Forms a bridge to the 30S subunit in the 70S ribosome.

One of the primary rRNA binding proteins. Required for association of the 30S and 50S subunits to form the 70S ribosome, for tRNA binding and peptide bond formation. It has been suggested to have peptidyltransferase activity; this is somewhat controversial. Makes several contacts with the 16S rRNA in the 70S ribosome. This Geobacter sulfurreducens (strain ATCC 51573 / DSM 12127 / PCA) protein is Large ribosomal subunit protein uL2.